A 196-amino-acid polypeptide reads, in one-letter code: 3-isopropylmalate dehydratase small subunit (196 aa).

It belongs to the LeuD family. LeuD type 1 subfamily. As to quaternary structure, heterodimer of LeuC and LeuD.

It carries out the reaction (2R,3S)-3-isopropylmalate = (2S)-2-isopropylmalate. It functions in the pathway amino-acid biosynthesis; L-leucine biosynthesis; L-leucine from 3-methyl-2-oxobutanoate: step 2/4. Functionally, catalyzes the isomerization between 2-isopropylmalate and 3-isopropylmalate, via the formation of 2-isopropylmaleate. This is 3-isopropylmalate dehydratase small subunit from Corynebacterium efficiens (strain DSM 44549 / YS-314 / AJ 12310 / JCM 11189 / NBRC 100395).